The sequence spans 288 residues: Stress response protein YhaX (288 aa).

The sequence is that of Stress response protein YhaX (yhaX) from Bacillus subtilis (strain 168).